The sequence spans 83 residues: MTIFNSISSISNPTRTALSSINTYNYNGSSVNDNSTAYFDNDFGGWGGLGNFCNGNGCGGGSSNVNVINLDIDIGSRRHRRCC.

The protein belongs to the UPF0512 family.

In Dictyostelium discoideum (Social amoeba), this protein is UPF0512 protein W.